Consider the following 353-residue polypeptide: tRNA N6-adenosine threonylcarbamoyltransferase (353 aa).

Fe cation-binding residues include H115 and H119. Residues 138-142, D171, G184, and N276 contribute to the substrate site; that span reads LVSGG. D304 is a binding site for Fe cation.

The protein belongs to the KAE1 / TsaD family. Requires Fe(2+) as cofactor.

The protein resides in the cytoplasm. It catalyses the reaction L-threonylcarbamoyladenylate + adenosine(37) in tRNA = N(6)-L-threonylcarbamoyladenosine(37) in tRNA + AMP + H(+). Required for the formation of a threonylcarbamoyl group on adenosine at position 37 (t(6)A37) in tRNAs that read codons beginning with adenine. Is involved in the transfer of the threonylcarbamoyl moiety of threonylcarbamoyl-AMP (TC-AMP) to the N6 group of A37, together with TsaE and TsaB. TsaD likely plays a direct catalytic role in this reaction. This Xanthomonas euvesicatoria pv. vesicatoria (strain 85-10) (Xanthomonas campestris pv. vesicatoria) protein is tRNA N6-adenosine threonylcarbamoyltransferase.